The sequence spans 101 residues: Large ribosomal subunit protein uL24 (101 aa).

This sequence belongs to the universal ribosomal protein uL24 family. In terms of assembly, part of the 50S ribosomal subunit.

Functionally, one of two assembly initiator proteins, it binds directly to the 5'-end of the 23S rRNA, where it nucleates assembly of the 50S subunit. Its function is as follows. One of the proteins that surrounds the polypeptide exit tunnel on the outside of the subunit. In Elusimicrobium minutum (strain Pei191), this protein is Large ribosomal subunit protein uL24.